The primary structure comprises 103 residues: Eukaryotic translation initiation factor 4E-1A-binding protein homolog (103 aa).

The segment at 49–103 is disordered; the sequence is NSPLSKTPPPQLAHITNTELNKKVEKSTTTPTTTTPPTTTAKPKPTNDDDIFPME. A compositionally biased stretch (low complexity) spans 76 to 92; sequence TTTPTTTTPPTTTAKPK.

The protein belongs to the eIF4E-binding protein family.

Functionally, regulates assembly of the eIF4F complex. The protein is Eukaryotic translation initiation factor 4E-1A-binding protein homolog (febA) of Dictyostelium discoideum (Social amoeba).